The chain runs to 558 residues: CTP synthase (558 aa).

Positions 1-267 (MAKFVFVTGG…CLEMLDVLNL (267 aa)) are amidoligase domain. Serine 13 is a CTP binding site. Serine 13 is a binding site for UTP. ATP is bound by residues 14–19 (SIGKGI) and aspartate 71. Aspartate 71 and glutamate 141 together coordinate Mg(2+). CTP-binding positions include 148-150 (DIE), 188-193 (KTKPTQ), and lysine 224. Residues 188-193 (KTKPTQ) and lysine 224 each bind UTP. Residues 292-534 (KVALVGKYVQ…IEAAQLRLPA (243 aa)) enclose the Glutamine amidotransferase type-1 domain. Residue glycine 354 participates in L-glutamine binding. Catalysis depends on cysteine 381, which acts as the Nucleophile; for glutamine hydrolysis. Residues 382-385 (LGMQ), glutamate 405, and arginine 462 contribute to the L-glutamine site. Catalysis depends on residues histidine 507 and glutamate 509. Residues 536–558 (PDEALRRQSQTNISAQEQPSRIG) form a disordered region. The segment covering 542–558 (RQSQTNISAQEQPSRIG) has biased composition (polar residues).

It belongs to the CTP synthase family. Homotetramer.

The catalysed reaction is UTP + L-glutamine + ATP + H2O = CTP + L-glutamate + ADP + phosphate + 2 H(+). It carries out the reaction L-glutamine + H2O = L-glutamate + NH4(+). It catalyses the reaction UTP + NH4(+) + ATP = CTP + ADP + phosphate + 2 H(+). It functions in the pathway pyrimidine metabolism; CTP biosynthesis via de novo pathway; CTP from UDP: step 2/2. Its activity is regulated as follows. Allosterically activated by GTP, when glutamine is the substrate; GTP has no effect on the reaction when ammonia is the substrate. The allosteric effector GTP functions by stabilizing the protein conformation that binds the tetrahedral intermediate(s) formed during glutamine hydrolysis. Inhibited by the product CTP, via allosteric rather than competitive inhibition. In terms of biological role, catalyzes the ATP-dependent amination of UTP to CTP with either L-glutamine or ammonia as the source of nitrogen. Regulates intracellular CTP levels through interactions with the four ribonucleotide triphosphates. This chain is CTP synthase, found in Prochlorococcus marinus (strain MIT 9313).